The chain runs to 519 residues: Cytosol aminopeptidase (519 aa).

Residue S42 is modified to Phosphoserine. An N6-succinyllysine modification is found at K45. Position 54 is a phosphoserine (S54). Residues K61 and K103 each carry the N6-succinyllysine modification. Residues S180 and S194 each carry the phosphoserine modification. L202, M203, and T205 together coordinate Zn(2+). Position 221 is an N6-acetyllysine; alternate (K221). K221 is subject to N6-succinyllysine; alternate. Position 238 is a phosphoserine (S238). Zn(2+) is bound by residues K282 and D287. Residues K282, D287, S292, and K294 each coordinate substrate. D287 serves as a coordination point for Mg(2+). The active site involves K294. Residues R303, D305, D364, and E366 each contribute to the Zn(2+) site. 2 residues coordinate substrate: D305 and D364. 2 residues coordinate Mg(2+): D364 and E366. Residue R368 is part of the active site. Position 455 is an N6-acetyllysine; alternate (K455). Residue K455 is modified to N6-succinyllysine; alternate. Position 476 is an N6-succinyllysine (K476). Position 489 is an N6-acetyllysine; alternate (K489). Residue K489 is modified to N6-succinyllysine; alternate.

The protein belongs to the peptidase M17 family. Homohexamer. It depends on Zn(2+) as a cofactor. Mn(2+) serves as cofactor.

The protein resides in the cytoplasm. The enzyme catalyses Release of an N-terminal amino acid, Xaa-|-Yaa-, in which Xaa is preferably Leu, but may be other amino acids including Pro although not Arg or Lys, and Yaa may be Pro. Amino acid amides and methyl esters are also readily hydrolyzed, but rates on arylamides are exceedingly low.. The catalysed reaction is an S-substituted L-cysteinylglycine + H2O = an S-substituted L-cysteine + glycine. It catalyses the reaction L-cysteinylglycine + H2O = L-cysteine + glycine. It carries out the reaction S-benzyl-L-cysteinylglycine + H2O = S-benzyl-L-cysteine + glycine. The enzyme catalyses Release of N-terminal proline from a peptide.. Cytosolic metallopeptidase that catalyzes the removal of unsubstituted N-terminal hydrophobic amino acids from various peptides. The presence of Zn(2+) ions is essential for the peptidase activity, and the association with other cofactors can modulate the substrate spectificity of the enzyme. For instance, in the presence of Mn(2+), it displays a specific Cys-Gly hydrolyzing activity of Cys-Gly-S-conjugates. Involved in the metabolism of glutathione and in the degradation of glutathione S-conjugates, which may play a role in the control of the cell redox status. This is Cytosol aminopeptidase from Homo sapiens (Human).